The primary structure comprises 456 residues: Antizyme inhibitor 2 (456 aa).

Cysteine 357 serves as the catalytic Proton donor; shared with dimeric partner.

This sequence belongs to the Orn/Lys/Arg decarboxylase class-II family. ODC antizyme inhibitor subfamily. Monomer. Interacts with OAZ1; this interaction disrupts the interaction between the antizyme and ODC1. Does not form a heterodimer with ODC1.

The protein localises to the nucleus. It localises to the cytoplasm. Its subcellular location is the perinuclear region. It is found in the membrane. The protein resides in the cytoplasmic vesicle. The protein localises to the endoplasmic reticulum-Golgi intermediate compartment. It localises to the golgi apparatus. Its subcellular location is the cis-Golgi network. It is found in the trans-Golgi network. The protein resides in the cytoplasmic granule. The protein localises to the cell projection. It localises to the axon. Its subcellular location is the dendrite. It is found in the perikaryon. In terms of biological role, antizyme inhibitor (AZI) protein that positively regulates ornithine decarboxylase (ODC) activity and polyamine uptake. AZI is an enzymatically inactive ODC homolog that counteracts the negative effect of ODC antizyme (AZ) on ODC activity by competing with ODC for antizyme-binding. Inhibits antizyme-dependent ODC degradation and releases ODC monomers from their inactive complex with antizymes, leading to formation of the catalytically active ODC homodimer and restoring polyamine production. Participates in the morphological integrity of the trans-Golgi network (TGN) and functions as a regulator of intracellular secretory vesicle trafficking. The sequence is that of Antizyme inhibitor 2 (azin2) from Xenopus laevis (African clawed frog).